The primary structure comprises 1036 residues: Potassium-transporting ATPase alpha chain 2 (1036 aa).

Residues 1-50 are disordered; the sequence is MRRKTEIYSVELNGTKDVKPADQRDDKKFKGAKNKDLEPNKSHEKEELKK. The Cytoplasmic portion of the chain corresponds to 1 to 99; it reads MRRKTEIYSV…PNTLTPPKQT (99 aa). Residues 14–50 are compositionally biased toward basic and acidic residues; it reads GTKDVKPADQRDDKKFKGAKNKDLEPNKSHEKEELKK. A helical membrane pass occupies residues 100 to 120; it reads PEIIKFLKQMVGGFSILLWIG. At 121 to 143 the chain is on the lumenal side; sequence AALCWIAFVIQYVNNSASLDNVY. Residues 144–164 form a helical membrane-spanning segment; that stretch reads LGAILVLVVILTGIFAYYQEA. Topologically, residues 165-300 are cytoplasmic; it reads KSTNIMASFS…SEKTPIAIEI (136 aa). Residues 301-320 form a helical membrane-spanning segment; sequence EHFVHIVAGVAVSIDIIFFI. Residues 321 to 332 are Lumenal-facing; that stretch reads TAVCMKYYVLDA. The helical transmembrane segment at 333-350 threads the bilayer; sequence IIFLISIIVANVPEGLLA. Residues 351–784 are Cytoplasmic-facing; it reads TVTVTLSLTA…EEGRLIFDNL (434 aa). The active-site 4-aspartylphosphate intermediate is D388. 2 residues coordinate Mg(2+): D729 and D733. Residues 785-804 form a helical membrane-spanning segment; it reads KKTIAYTLTKNIAELCPFLI. Topologically, residues 805-814 are lumenal; sequence YIVAGLPLPI. The chain crosses the membrane as a helical span at residues 815–835; that stretch reads GTITILFIDLGTDIIPSIALA. Over 836 to 855 the chain is Cytoplasmic; sequence YEKAESDIMNRKPRHKKKDR. Residues 856-878 form a helical membrane-spanning segment; the sequence is LVNTQLAIYSYLHIGLMQALGGF. The Lumenal portion of the chain corresponds to 879–930; it reads LVYFTVYAQQGFWPTSLINLRVAWETDDINDLEDSYGQEWTRYQRKYLEWTG. The helical transmembrane segment at 931–950 threads the bilayer; it reads STAFFVAIMIQQIADLIIRK. At 951–964 the chain is on the cytoplasmic side; sequence TRRNSIFQQGLFRN. At S955 the chain carries Phosphoserine; by PKA. The chain crosses the membrane as a helical span at residues 965-983; the sequence is KVIWVGIASQVIVALILSY. The Lumenal portion of the chain corresponds to 984–998; it reads GLGSVPALSFTMLRV. A helical transmembrane segment spans residues 999-1019; the sequence is QYWFVAVPHAILIWVYDEMRK. The Cytoplasmic segment spans residues 1020–1036; sequence LFIRLYPGSWWDKNMYY.

It belongs to the cation transport ATPase (P-type) (TC 3.A.3) family. Type IIC subfamily. The ATPase pump is composed of a catalytic alpha subunit and an auxiliary non-catalytic beta subunit. The alpha subunit pairs with the beta subunit of gastric H(+)/K(+) ATPase ATP4B or the beta subunit of Na(+)/K(+) ATPases ATP1B1 and ATP1B3; this interaction is required for the formation of a functionally active pump and its targeting at the plasma membrane. In terms of tissue distribution, expressed at high levels in distal colon, coagulating and preputial glands; at much lower levels in proximal colon, kidney, uterus, brain, placenta and lung; and at trace levels in heart and forestomach. Expressed in distal colon epithelium (at protein level). Expressed in anterior prostate (at protein level).

Its subcellular location is the apical cell membrane. It carries out the reaction K(+)(out) + ATP + H2O + H(+)(in) = K(+)(in) + ADP + phosphate + 2 H(+)(out). The catalysed reaction is K(+)(out) + Na(+)(in) + ATP + H2O = K(+)(in) + Na(+)(out) + ADP + phosphate + H(+). With respect to regulation, up-regulated by K(+) ions in a dose-dependent way. In terms of biological role, the catalytic subunit of a H(+)/K(+) ATPase and/or Na(+)/K(+) ATPase pump which transports K(+) ions in exchange for Na(+) and/or H(+) ions across the apical membrane of epithelial cells. Uses ATP as an energy source to pump K(+) ions into the cell while transporting Na(+) and/or H(+) ions to the extracellular compartment. Involved in the maintenance of electrolyte homeostasis through K(+) ion absorption in kidney and colon. In the airway epithelium, may play a primary role in mucus acidification regulating its viscosity and clearance. This is Potassium-transporting ATPase alpha chain 2 (Atp12a) from Rattus norvegicus (Rat).